We begin with the raw amino-acid sequence, 485 residues long: Cholesterol 16,22-dihydroxylase CYP90G4 (485 aa).

A helical membrane pass occupies residues 4-24 (VVILFFLFPTLLVLVVAVLGL). Residue C432 participates in heme binding.

It belongs to the cytochrome P450 family. As to expression, mainly expressed in leaves and, at low levels, in roots and stems.

It localises to the membrane. The catalysed reaction is cholesterol + 2 reduced [NADPH--hemoprotein reductase] + 2 O2 = (16S,22S)-dihydroxycholesterol + 2 oxidized [NADPH--hemoprotein reductase] + 2 H2O + 2 H(+). The protein operates within steroid metabolism; cholesterol metabolism. Involved in the biosynthesis of spiroketal steroid and saponin natural products from cholesterol such as diosgenin and analogs (e.g. furostanol and spirostanol), plant defense compounds used as main precursors for the industrial production of steroid hormones. During the 5,6-spiroketalization of cholesterol, catalyzes the hydroxylation of cholesterol to form 16S,22S-dihydroxycholesterol and, possibly, the subsequent conversion of 16S,22S-dihydroxycholesterol into 16-oxo-22-hydroxy-cholesterol and 16-hydroxy-22-oxo-cholesterol. 16-hydroxy-22-oxo-cholesterol submit a spontaneous reaction leading to the production of furostanol-type steroid diastereomers, precursors of diosgenin. The chain is Cholesterol 16,22-dihydroxylase CYP90G4 from Paris polyphylla (Daiswa polyphylla).